We begin with the raw amino-acid sequence, 784 residues long: Transcription factor E4F1 (784 aa).

The tract at residues 41–85 (GFLGLPAPFSEEDEDDVHRCGRCQAEFTALEDFVQHKIQKACQRA) is required for ubiquitin ligase activity. Residue Ser-50 is modified to Phosphoserine. Residues 184-263 (LLVNKDGRYV…GKSFRESGAL (80 aa)) form a mediates dimerization, DNA-binding, transcription repression of CCNA2 and interaction with HMGA2 region. 2 consecutive C2H2-type zinc fingers follow at residues 192–214 (YVCALCHKTFKTGSILKAHMVTH) and 220–242 (HECKLCGASFRTKGSLIRHHRRH). The segment at 248–272 (YKCSKCGKSFRESGALTRHLKSLTP) adopts a C2H2-type 3; degenerate zinc-finger fold. The interval 369 to 566 (NLLHQAMQNS…REKGSLVRHV (198 aa)) is mediates interaction with CDKN2A. C2H2-type zinc fingers lie at residues 435 to 457 (HPCPQCSETFPTAATLEAHKRGH), 463 to 485 (FACAQCGKAFPKAYLLKKHQEVH), 491 to 513 (FRCGDCGKLYKTIAHVRGHRRVH), 519 to 541 (YPCPKCGKRYKTKNAQQVHFRTH), and 547 to 569 (HVCQFCSRGFREKGSLVRHVRHH). Residues 435-599 (HPCPQCSETF…LNRHLRTKGG (165 aa)) are interaction with BMI1. The tract at residues 521–580 (CPKCGKRYKTKNAQQVHFRTHLEEKPHVCQFCSRGFREKGSLVRHVRHHTGEKPFKCYKC) is mediates interaction with TP53. Residues 575 to 597 (FKCYKCGRGFAEHGTLNRHLRTK) form a C2H2-type 9; degenerate zinc finger. Residues 575 to 597 (FKCYKCGRGFAEHGTLNRHLRTK) form a mediates interaction with RASSF1 region.

As to quaternary structure, homodimer; binds DNA as a dimer. Forms a complex with CDKN2A and TP53. Interactions with TP53, RB1, ANP32A, BMI1 and FHL2 regulate E4F1 activity. Interacts with HDAC1, HMGA2 and RASSF1. In terms of assembly, (Microbial infection) Interacts with HBV protein X. Post-translationally, proteolytic cleavage produces a 50 kDa N-terminal peptide (p50E4F) which has a DNA-binding activity and activates transcription in presence of the adenoviral E1A protein. The major full-length protein (p120E4F) functions as a repressor of transcription. In terms of processing, phosphorylated; p120E4F and p50E4F are both phosphorylated. Phosphorylation is cell cycle-dependent and differentially regulates DNA-binding activity and function of both forms. May be sumoylated by UBE2I upon interaction with CDKN2A. Ubiquitously expressed.

The protein resides in the nucleus. It is found in the nucleoplasm. Its subcellular location is the cytoplasm. The catalysed reaction is S-ubiquitinyl-[E2 ubiquitin-conjugating enzyme]-L-cysteine + [acceptor protein]-L-lysine = [E2 ubiquitin-conjugating enzyme]-L-cysteine + N(6)-ubiquitinyl-[acceptor protein]-L-lysine.. It participates in protein modification; protein ubiquitination. Functionally, may function as a transcriptional repressor. May also function as a ubiquitin ligase mediating ubiquitination of chromatin-associated TP53. Functions in cell survival and proliferation through control of the cell cycle. Functions in the p53 and pRB tumor suppressor pathways and regulates the cyclin CCNA2 transcription. Its function is as follows. Identified as a cellular target of the adenoviral oncoprotein E1A, it is required for both transcriptional activation and repression of viral genes. The protein is Transcription factor E4F1 (E4F1) of Homo sapiens (Human).